A 427-amino-acid chain; its full sequence is Serine--tRNA ligase (427 aa).

231-233 serves as a coordination point for L-serine; it reads TAE. 262–264 contributes to the ATP binding site; the sequence is RSE. Residue glutamate 285 participates in L-serine binding. 349 to 352 lines the ATP pocket; sequence EISS. Serine 385 contacts L-serine.

Belongs to the class-II aminoacyl-tRNA synthetase family. Type-1 seryl-tRNA synthetase subfamily. In terms of assembly, homodimer. The tRNA molecule binds across the dimer.

The protein resides in the cytoplasm. The enzyme catalyses tRNA(Ser) + L-serine + ATP = L-seryl-tRNA(Ser) + AMP + diphosphate + H(+). It catalyses the reaction tRNA(Sec) + L-serine + ATP = L-seryl-tRNA(Sec) + AMP + diphosphate + H(+). It functions in the pathway aminoacyl-tRNA biosynthesis; selenocysteinyl-tRNA(Sec) biosynthesis; L-seryl-tRNA(Sec) from L-serine and tRNA(Sec): step 1/1. Functionally, catalyzes the attachment of serine to tRNA(Ser). Is also able to aminoacylate tRNA(Sec) with serine, to form the misacylated tRNA L-seryl-tRNA(Sec), which will be further converted into selenocysteinyl-tRNA(Sec). The sequence is that of Serine--tRNA ligase from Allorhizobium ampelinum (strain ATCC BAA-846 / DSM 112012 / S4) (Agrobacterium vitis (strain S4)).